Consider the following 565-residue polypeptide: MARPKNVKHIFVTGGVISSLGKGILSASLGMLLKSRGLRVAIQKYDPYINVDPGTMSPYQHGEVYVTDDGAETDLDLGHYERFLDEPTSQASNLTMGRVYKSVIDKERRGEYLGGTVQVVPHVIDEIKEKMNDLAKNGSLDVLITEIGGTIGDIESLPFLEAMRQLKLELGDRNVLNIHLTFVPYIKAASELKTKPTQHSVKMLLETGIQPDILVCRSEKPLSREIKNKVGHFCNVHEQDVIGLNDCETIYAVPLMLLREQLDLRVMKKLGLKKFREPNLEHWKRFCEKVTNPKDGEITIGVCGKYTEYPDAYKSIIEAFIHAGASNDVKVSVKMLRAEDAEDSSFNMNKAFEGVSGLLVAPGFGDRGIEGKVQFVQYARENNIPFFGICLGMQCASIEFARNVCDLPDANSTEFNKRARFPVIDLMEQQKKVKEKGGTMRLGSYPCILKEGSKVHEVYGKFLINERHRHRYEFNNQFRKLFEEKGMIFSGTSPNGELVEIIELKEHRWFVAVQFHPELKSRVQKVHPLFDGFVQAAKEFAMGKRQLTLEDELPRLSSEEMEGAG.

The interval 1 to 272 (MARPKNVKHI…DLRVMKKLGL (272 aa)) is amidoligase domain. A CTP-binding site is contributed by S18. S18 lines the UTP pocket. Residue 19–24 (SLGKGI) participates in ATP binding. Y59 is an L-glutamine binding site. Residue D76 coordinates ATP. Positions 76 and 146 each coordinate Mg(2+). Residues 153–155 (DIE), 193–198 (KTKPTQ), and K229 each bind CTP. Residues 193 to 198 (KTKPTQ) and K229 contribute to the UTP site. One can recognise a Glutamine amidotransferase type-1 domain in the interval 299–543 (TIGVCGKYTE…VQAAKEFAMG (245 aa)). G363 is a binding site for L-glutamine. C390 acts as the Nucleophile; for glutamine hydrolysis in catalysis. L-glutamine-binding positions include 391–394 (LGMQ), E414, and R471. Residues H516 and E518 contribute to the active site.

Belongs to the CTP synthase family. In terms of assembly, homotetramer.

It catalyses the reaction UTP + L-glutamine + ATP + H2O = CTP + L-glutamate + ADP + phosphate + 2 H(+). It carries out the reaction L-glutamine + H2O = L-glutamate + NH4(+). The catalysed reaction is UTP + NH4(+) + ATP = CTP + ADP + phosphate + 2 H(+). It participates in pyrimidine metabolism; CTP biosynthesis via de novo pathway; CTP from UDP: step 2/2. Allosterically activated by GTP, when glutamine is the substrate; GTP has no effect on the reaction when ammonia is the substrate. The allosteric effector GTP functions by stabilizing the protein conformation that binds the tetrahedral intermediate(s) formed during glutamine hydrolysis. Inhibited by the product CTP, via allosteric rather than competitive inhibition. Functionally, catalyzes the ATP-dependent amination of UTP to CTP with either L-glutamine or ammonia as the source of nitrogen. Regulates intracellular CTP levels through interactions with the four ribonucleotide triphosphates. In Chlorobaculum parvum (strain DSM 263 / NCIMB 8327) (Chlorobium vibrioforme subsp. thiosulfatophilum), this protein is CTP synthase.